A 153-amino-acid chain; its full sequence is Regulatory protein RecX (153 aa).

It belongs to the RecX family.

The protein localises to the cytoplasm. In terms of biological role, modulates RecA activity. In Pseudomonas aeruginosa (strain UCBPP-PA14), this protein is Regulatory protein RecX.